The chain runs to 305 residues: N-acetyl-D-glucosamine kinase (305 aa).

ATP is bound by residues 4–11 (GFDIGGTK) and 133–140 (GFGGGLVF). The Zn(2+) site is built by His157, Cys178, Cys180, and Cys185.

This sequence belongs to the ROK (NagC/XylR) family. NagK subfamily.

It catalyses the reaction N-acetyl-D-glucosamine + ATP = N-acetyl-D-glucosamine 6-phosphate + ADP + H(+). The protein operates within cell wall biogenesis; peptidoglycan recycling. Functionally, catalyzes the phosphorylation of N-acetyl-D-glucosamine (GlcNAc) derived from cell-wall degradation, yielding GlcNAc-6-P. The chain is N-acetyl-D-glucosamine kinase from Histophilus somni (strain 129Pt) (Haemophilus somnus).